A 147-amino-acid chain; its full sequence is Hordoindoline-B2 (147 aa).

Residues 1–19 form the signal peptide; sequence MKTLFLLALLALVASTTSA. The propeptide occupies 20–28; sequence QYSVGGGYN.

In terms of processing, five disulfide bonds are present. As to expression, found in endosperm and aleurone layer of developing kernels, but not in the embryo.

It is found in the membrane. It localises to the secreted. The protein resides in the extracellular space. In terms of biological role, acts as a membranotoxin, probably through its antibacterial and antifungal activities, contributing to the defense mechanism of the plant against predators. Forms monovalent cation-selective ion channels in membranes. Contributes to grain texture and hardness. The polypeptide is Hordoindoline-B2 (HINB-2) (Hordeum vulgare (Barley)).